Reading from the N-terminus, the 218-residue chain is Zinc finger BED domain-containing protein 2 (218 aa).

The segment covering 1–11 has biased composition (acidic residues); that stretch reads MMRREDEEEEG. The disordered stretch occupies residues 1–24; sequence MMRREDEEEEGTMMKAKGDLEMKE. The BED-type zinc finger occupies 52 to 113; it reads TRFSEAWEYF…SMHREELEKS (62 aa). C78, C81, H101, and H106 together coordinate Zn(2+). The disordered stretch occupies residues 104-137; that stretch reads SMHREELEKSGHGQAGQRQDPRPHGPQLPTGIEG. Residues 105 to 114 are compositionally biased toward basic and acidic residues; sequence MHREELEKSG.

As to expression, expressed in keratinocytes.

The protein localises to the nucleus. Functionally, transcriptional regulator which has intrinsic repressor activity and which competes with the transcriptional activator IRF1 for binding to the 5'-[CA]GAA[AC]C[CT]-3' consensus sequence in gene promoters. May thereby play a role in keratinocyte differentiation. The sequence is that of Zinc finger BED domain-containing protein 2 (ZBED2) from Homo sapiens (Human).